The sequence spans 396 residues: tRNA(Met) cytidine acetate ligase (396 aa).

ATP-binding positions include 9–22 (IVEY…HLHH), Gly103, Asn154, and Arg179.

This sequence belongs to the TmcAL family.

It localises to the cytoplasm. The catalysed reaction is cytidine(34) in elongator tRNA(Met) + acetate + ATP = N(4)-acetylcytidine(34) in elongator tRNA(Met) + AMP + diphosphate. Its function is as follows. Catalyzes the formation of N(4)-acetylcytidine (ac(4)C) at the wobble position of elongator tRNA(Met), using acetate and ATP as substrates. First activates an acetate ion to form acetyladenylate (Ac-AMP) and then transfers the acetyl group to tRNA to form ac(4)C34. The sequence is that of tRNA(Met) cytidine acetate ligase from Fusobacterium nucleatum subsp. nucleatum (strain ATCC 25586 / DSM 15643 / BCRC 10681 / CIP 101130 / JCM 8532 / KCTC 2640 / LMG 13131 / VPI 4355).